The primary structure comprises 248 residues: Probable transcriptional regulatory protein HCH_04926 (248 aa).

Belongs to the TACO1 family.

It localises to the cytoplasm. The chain is Probable transcriptional regulatory protein HCH_04926 from Hahella chejuensis (strain KCTC 2396).